The primary structure comprises 324 residues: Corticotropin-releasing factor-binding protein (324 aa).

An N-terminal signal peptide occupies residues 1–23; the sequence is MAPTLKLQCHFILVCLLALRGES. Disulfide bonds link cysteine 62/cysteine 83, cysteine 106/cysteine 143, cysteine 185/cysteine 207, cysteine 239/cysteine 266, and cysteine 279/cysteine 320. Asparagine 206 carries an N-linked (GlcNAc...) asparagine glycan.

This sequence belongs to the CRF-binding protein family.

The protein resides in the secreted. In terms of biological role, binds CRF and inactivates it. May prevent inappropriate pituitary-adrenal stimulation in pregnancy. In Ovis aries (Sheep), this protein is Corticotropin-releasing factor-binding protein (CRHBP).